Reading from the N-terminus, the 510-residue chain is Coatomer subunit delta (510 aa).

One can recognise an MHD domain in the interval 270–510; sequence MESVHMKIEE…TFLVDKYEIL (241 aa).

It belongs to the adaptor complexes medium subunit family. Delta-COP subfamily. Oligomeric complex that consists of at least the alpha, beta, beta', gamma, delta, epsilon and zeta subunits.

It localises to the cytoplasm. Its subcellular location is the golgi apparatus membrane. The protein resides in the cytoplasmic vesicle. The protein localises to the COPI-coated vesicle membrane. Functionally, the coatomer is a cytosolic protein complex that binds to dilysine motifs and reversibly associates with Golgi non-clathrin-coated vesicles, which further mediate biosynthetic protein transport from the ER, via the Golgi up to the trans Golgi network. Coatomer complex is required for budding from Golgi membranes, and is essential for the retrograde Golgi-to-ER transport of dilysine-tagged proteins. In mammals, the coatomer can only be recruited by membranes associated to ADP-ribosylation factors (ARFs), which are small GTP-binding proteins; the complex also influences the Golgi structural integrity, as well as the processing, activity, and endocytic recycling of LDL receptors. This chain is Coatomer subunit delta (ARCN1), found in Gallus gallus (Chicken).